Here is a 209-residue protein sequence, read N- to C-terminus: V-type ATP synthase subunit D 2 (209 aa).

It belongs to the V-ATPase D subunit family.

In terms of biological role, produces ATP from ADP in the presence of a proton gradient across the membrane. The protein is V-type ATP synthase subunit D 2 (atpD2) of Treponema pallidum (strain Nichols).